The following is a 282-amino-acid chain: Chlorite dismutase (282 aa).

The N-terminal stretch at 1–31 (MTNLSIHNFKLSLVAAVIGSAMVMTSSPVAA) is a signal peptide. A Ca(2+)-binding site is contributed by Glu-104. His-204 serves as a coordination point for heme. The active-site Proton acceptor is Arg-217. Ca(2+)-binding residues include Asp-226 and Thr-265.

The protein belongs to the chlorite dismutase family. In terms of assembly, homopentamer. Requires heme b as cofactor.

Its subcellular location is the periplasm. It carries out the reaction chloride + O2 = chlorite. Functionally, catalyzes the heme-dependent decomposition of chlorite to O(2) and chloride with high efficiency and specificity. Used to detoxify chlorite, a by-product of the reduction of perchlorate, a primarily anthropogenic pollutant, in perchlorate-respiring bacteria. In Dechloromonas aromatica (strain RCB), this protein is Chlorite dismutase.